The primary structure comprises 238 residues: Small ribosomal subunit protein uS2 (238 aa).

The protein belongs to the universal ribosomal protein uS2 family.

The polypeptide is Small ribosomal subunit protein uS2 (Prochlorococcus marinus (strain SARG / CCMP1375 / SS120)).